Consider the following 622-residue polypeptide: Prolactin receptor (622 aa).

An N-terminal signal peptide occupies residues 1–24 (MKENVASATVFTLLLFLNTCLLNG). The Extracellular segment spans residues 25-234 (QLPPGKPEIF…QIPSDFTMND (210 aa)). 2 consecutive Fibronectin type-III domains span residues 27-128 (PPGK…VQPD) and 129-229 (PPLE…IPSD). C36 and C46 are oxidised to a cystine. N-linked (GlcNAc...) asparagine glycosylation is present at N59. C75 and C86 are disulfide-bonded. N104 is a glycosylation site (N-linked (GlcNAc...) asparagine). Positions 211 and 212 each coordinate Zn(2+). Residues 215–219 (WSAWS) carry the WSXWS motif motif. Residue N233 is glycosylated (N-linked (GlcNAc...) asparagine). A helical membrane pass occupies residues 235-258 (TTVWISVAVLSAVICLIIVWAVAL). The Cytoplasmic portion of the chain corresponds to 259–622 (KGYSMVTCIF…DPACFTHSFH (364 aa)). A Box 1 motif motif is present at residues 267 to 275 (IFPPVPGPK). Disordered regions lie at residues 326-378 (MSVH…YDPE), 461-505 (SSQT…GSAK), and 520-545 (ALSL…NNKE). Basic and acidic residues predominate over residues 466–486 (KSREEGKATQQREVESFHSET).

This sequence belongs to the type I cytokine receptor family. Type 1 subfamily. As to quaternary structure, homodimer upon hormone binding. Interacts with SMARCA1. Interacts with GH1. Interacts with CSH. Interacts with NEK3 and VAV2 and this interaction is prolactin-dependent. As to expression, expressed in breast, placenta, kidney, liver and pancreas.

Its subcellular location is the membrane. The protein localises to the secreted. This is a receptor for the anterior pituitary hormone prolactin (PRL). Acts as a prosurvival factor for spermatozoa by inhibiting sperm capacitation through suppression of SRC kinase activation and stimulation of AKT. Isoform 4 is unable to transduce prolactin signaling. Isoform 6 is unable to transduce prolactin signaling. This Homo sapiens (Human) protein is Prolactin receptor (PRLR).